Reading from the N-terminus, the 487-residue chain is MGCEVSKLCAFCCVSDPEGSNHGVTGLDEDRRGEGNDLPQFREFSIETLRNATSGFATENIVSEHGEKAPNVVYKGKLDNQRRIAVKRFNRKAWPDSRQFLEEAKAVGQLRNYRMANLLGCCYEGEERLLVAEFMPNETLAKHLFHWESQPMKWAMRLRVALHIAQALEYCTGKGRALYHDLNAYRVLFDDDSNPRLSCFGLMKNSRDGKSYSTNLAFTPPEYLRTGRVTPESVMYSYGTLLLDLLSGKHIPPSHALDLIRDRNIQMLIDSCLEGQFSSDDGTELIRLASRCLQYEPRERPNPKSLVTAMIPLQKDLETPSHQLMGIPSSASTTPLSPLGEACLRTDLTAIHEILEKLSYKDDEGAATELSFQMWTNQMQDSLNFKKKGDVAFRHKEFANAIDCYSQFIEGGTMVSPTVYARRSLCYLMNEMPQEALNDAMQAQVISPAWHIASYLQAVALSALGQENEAHAALKDGSMLESKRNRL.

Glycine 2 carries the N-myristoyl glycine lipid modification. The region spanning 59–325 is the Protein kinase domain; the sequence is ENIVSEHGEK…DLETPSHQLM (267 aa). ATP-binding positions include 65–73 and lysine 87; that span reads HGEKAPNVV. Aspartate 181 serves as the catalytic Proton acceptor.

This sequence belongs to the protein kinase superfamily. Ser/Thr protein kinase family.

The protein localises to the cell membrane. It catalyses the reaction L-seryl-[protein] + ATP = O-phospho-L-seryl-[protein] + ADP + H(+). The catalysed reaction is L-threonyl-[protein] + ATP = O-phospho-L-threonyl-[protein] + ADP + H(+). Probable serine/threonine kinase that acts as a positive regulator of brassinosteroid (BR) signaling downstream of the receptor kinase BRI1. Functions redundantly with BSK3, BSK5, BSK6 and BSK8. The polypeptide is Serine/threonine-protein kinase BSK7 (Arabidopsis thaliana (Mouse-ear cress)).